The primary structure comprises 74 residues: DNA-directed RNA polymerase subunit omega (74 aa).

Belongs to the RNA polymerase subunit omega family. In terms of assembly, the RNAP catalytic core consists of 2 alpha, 1 beta/beta' and 1 omega subunit. When a sigma factor is associated with the core the holoenzyme is formed, which can initiate transcription.

The enzyme catalyses RNA(n) + a ribonucleoside 5'-triphosphate = RNA(n+1) + diphosphate. In terms of biological role, promotes RNA polymerase assembly. Latches the N- and C-terminal regions of the beta' subunit thereby facilitating its interaction with the beta and alpha subunits. The protein is DNA-directed RNA polymerase subunit omega of Helicobacter hepaticus (strain ATCC 51449 / 3B1).